Consider the following 103-residue polypeptide: Pyrimidine/purine nucleoside phosphorylase (103 aa).

It belongs to the nucleoside phosphorylase PpnP family.

The enzyme catalyses a purine D-ribonucleoside + phosphate = a purine nucleobase + alpha-D-ribose 1-phosphate. The catalysed reaction is adenosine + phosphate = alpha-D-ribose 1-phosphate + adenine. It carries out the reaction cytidine + phosphate = cytosine + alpha-D-ribose 1-phosphate. It catalyses the reaction guanosine + phosphate = alpha-D-ribose 1-phosphate + guanine. The enzyme catalyses inosine + phosphate = alpha-D-ribose 1-phosphate + hypoxanthine. The catalysed reaction is thymidine + phosphate = 2-deoxy-alpha-D-ribose 1-phosphate + thymine. It carries out the reaction uridine + phosphate = alpha-D-ribose 1-phosphate + uracil. It catalyses the reaction xanthosine + phosphate = alpha-D-ribose 1-phosphate + xanthine. Functionally, catalyzes the phosphorolysis of diverse nucleosides, yielding D-ribose 1-phosphate and the respective free bases. Can use uridine, adenosine, guanosine, cytidine, thymidine, inosine and xanthosine as substrates. Also catalyzes the reverse reactions. This is Pyrimidine/purine nucleoside phosphorylase from Shewanella baltica (strain OS223).